The following is a 439-amino-acid chain: MTPILTVLICLGLSLDPRTHVQAGPLPKPTLWAEPGSVITQGSPVTLRCQGSLETQEYHLYREKKTALWITRIPQELVKKGQFPILSITWEHAGRYCCIYGSHTAGLSESSDPLELVVTGAYSKPTLSALPSPVVTSGGNVTIQCDSQVAFDGFILCKEGEDEHPQCLNSHSHARGSSRAIFSVGPVSPSRRWSYRCYGYDSRAPYVWSLPSDLLGLLVPGVSKKPSLSVQPGPVVAPGEKLTFQCGSDAGYDRFVLYKEWGRDFLQRPGRQPQAGLSQANFTLGPVSRSYGGQYTCSGAYNLSSEWSAPSDPLDILITGQIRARPFLSVRPGPTVASGENVTLLCQSQGGMHTFLLTKEGAADSPLRLKSKRQSHKYQAEFPMSPVTSAHAGTYRCYGSLSSNPYLLTHPSDPLELVVSGAAETLSPPQNKSDSKAGE.

Residues 1–23 (MTPILTVLICLGLSLDPRTHVQA) form the signal peptide. Ig-like C2-type domains are found at residues 27 to 108 (PKPT…AGLS), 119 to 224 (TGAY…GVSK), 226 to 315 (PSLS…DPLD), and 326 to 415 (PFLS…SDPL). A disulfide bridge connects residues cysteine 49 and cysteine 98. A glycan (N-linked (GlcNAc...) asparagine) is linked at asparagine 140. 3 disulfides stabilise this stretch: cysteine 145–cysteine 197, cysteine 157–cysteine 167, and cysteine 246–cysteine 297. Asparagine 281, asparagine 302, and asparagine 341 each carry an N-linked (GlcNAc...) asparagine glycan. An intrachain disulfide couples cysteine 346 to cysteine 397. Residue asparagine 431 is glycosylated (N-linked (GlcNAc...) asparagine).

In terms of processing, N-glycosylation is required for ligand binding. Detected in B-cells, and at lower levels in natural killer (NK) cells. Detected in peripheral blood monocytes and lung.

It localises to the secreted. In terms of biological role, acts as a soluble receptor for class I MHC antigens. Binds both classical and non-classical HLA class I molecules but with reduced affinities compared to LILRB1 or LILRB2. Binds with high affinity to the surface of monocytes, leading to abolish LPS-induced TNF-alpha production by monocytes. The chain is Leukocyte immunoglobulin-like receptor subfamily A member 3 (LILRA3) from Homo sapiens (Human).